The primary structure comprises 281 residues: Secretory carrier-associated membrane protein 5 (281 aa).

Residues 1-49 (MHHDPNPFDEGADDNPFSNGGGGGARRGGGGGGGGGGGGGKSQFSFGFG) are disordered. Over 1–139 (MHHDPNPFDE…AQKLQYLAFA (139 aa)) the chain is Cytoplasmic. The span at 19 to 49 (NGGGGGARRGGGGGGGGGGGGGKSQFSFGFG) shows a compositional bias: gly residues. A coiled-coil region spans residues 76–102 (KELLQWEADLKRREADIRRREEALKSA). A run of 4 helical transmembrane segments spans residues 140–160 (SWLG…VCWI), 167–187 (LFFL…LMWY), 202–222 (FGWF…AAIA), and 250–270 (IFYF…IWVL). The Cytoplasmic segment spans residues 271-281 (QKVYMYFRGHK).

This sequence belongs to the SCAMP family.

Its subcellular location is the cell membrane. It localises to the cytoplasmic vesicle. The protein localises to the secretory vesicle membrane. Probably involved in membrane trafficking. The protein is Secretory carrier-associated membrane protein 5 (SCAMP5) of Oryza sativa subsp. japonica (Rice).